A 95-amino-acid polypeptide reads, in one-letter code: Protein RALF-like 16 (95 aa).

Residues 1–29 (MVAYEKSPIVFLFATMMLVMFLFCGSGEA) form the signal peptide. 2 disulfides stabilise this stretch: C45–C53 and C65–C71.

Belongs to the plant rapid alkalinization factor (RALF) family.

The protein resides in the secreted. In terms of biological role, cell signaling peptide that may regulate plant stress, growth, and development. Mediates a rapid alkalinization of extracellular space by mediating a transient increase in the cytoplasmic Ca(2+) concentration leading to a calcium-dependent signaling events through a cell surface receptor and a concomitant activation of some intracellular mitogen-activated protein kinases. In Arabidopsis thaliana (Mouse-ear cress), this protein is Protein RALF-like 16 (RALFL16).